The following is a 188-amino-acid chain: Putative manganese efflux pump MntP (188 aa).

6 helical membrane passes run 3–23 (ITAT…ASIG), 41–61 (LIFG…GMLA), 66–86 (LEWN…RMII), 107–129 (LLVT…LAFL), 143–163 (ATLI…PLLG), and 168–188 (ILGG…HFHG).

This sequence belongs to the MntP (TC 9.B.29) family.

Its subcellular location is the cell inner membrane. Its function is as follows. Probably functions as a manganese efflux pump. The protein is Putative manganese efflux pump MntP of Citrobacter koseri (strain ATCC BAA-895 / CDC 4225-83 / SGSC4696).